A 301-amino-acid polypeptide reads, in one-letter code: uncharacterized protein (301 aa).

This sequence belongs to the asfivirus E301R family. In terms of assembly, interacts with host IRF3.

Plays a role in the inhibition of host innate immune system by acting as a negatively regulator of type I interferon production. Mechanistically, interacts with and prevents host IRF3 nuclear localization to inhibit its transcriptional activity. This is an uncharacterized protein from African swine fever virus (isolate Warthog/Namibia/Wart80/1980) (ASFV).